The sequence spans 443 residues: Xaa-Pro dipeptidase (443 aa).

5 residues coordinate Mn(2+): aspartate 246, aspartate 257, histidine 339, glutamate 384, and glutamate 423.

This sequence belongs to the peptidase M24B family. Bacterial-type prolidase subfamily. Requires Mn(2+) as cofactor.

It carries out the reaction Xaa-L-Pro dipeptide + H2O = an L-alpha-amino acid + L-proline. Functionally, splits dipeptides with a prolyl residue in the C-terminal position. The sequence is that of Xaa-Pro dipeptidase from Erwinia tasmaniensis (strain DSM 17950 / CFBP 7177 / CIP 109463 / NCPPB 4357 / Et1/99).